The sequence spans 867 residues: Dynamin-1 (867 aa).

Residues 28–294 (DLDLPQIAVV…LTNHIRDTLP (267 aa)) enclose the Dynamin-type G domain. The segment at 38–45 (GGQSAGKS) is G1 motif. Residues S41, G43, K44, S45, S46, R59, and G60 each contribute to the GDP site. A G2 motif region spans residues 64-66 (VTR). A Phosphotyrosine modification is found at Y80. Position 125 is a 3'-nitrotyrosine; alternate (Y125). Phosphotyrosine; alternate is present on Y125. Residues 136–139 (DLPG) form a G3 motif region. Residues 205–208 (TKLD) form a G4 motif region. GDP contacts are provided by K206, D208, D211, N236, R237, and Q239. Residues 235–238 (VNRS) are G5 motif. S306 and S347 each carry phosphoserine. Position 354 is a phosphotyrosine (Y354). S512 is modified (phosphoserine). Residues 515-625 (QDEILVIRKG…WKASFLRAGV (111 aa)) form the PH domain. The GED domain occupies 659-750 (VETIRNLVDS…IIGDINTTTV (92 aa)). The disordered stretch occupies residues 767–867 (SVPAGRRSPT…HENRAGKARL (101 aa)). Residues S774 and S778 each carry the phosphoserine modification. R796 carries the post-translational modification Omega-N-methylarginine. A Phosphoserine modification is found at S822. A compositionally biased stretch (pro residues) spans 825-843 (PFGPPPQVPSRPNRAPPGV). 3 positions are modified to phosphoserine: G847, L851, and K857. Residues 856-867 (GKHENRAGKARL) are compositionally biased toward basic and acidic residues.

It belongs to the TRAFAC class dynamin-like GTPase superfamily. Dynamin/Fzo/YdjA family. As to quaternary structure, homodimer; homodimerization is mediated by the dynamin-type G domain which promotes assembly-stimulated GTPase activity. Homo-tetramer formed from two dimers in the absence of lipid. Oligomerizes into a helical polymer that self-assembles around the vesicle membrane, when associated to the menbrane through lipid binding. Interacts (via C-terminal proline-rich domain (PRD)) with SNX9 (via SH3 domain); this interaction allows regulation of DNM1 self-assembly during late stages of endocytic vesicle formation and supports DNM1's early functions in accelerating clathrin-coated pits (CCPs) maturation in non neuronals cell. Interacts (via C-terminal proline-rich domain (PRD)) with MYO1E (via SH3 domain); this interaction regulates receptor-mediated endocytosis. Interacts with SNX33 (via SH3 domain); this interaction decreases DNM1-dependent endocytosis. Interacts with DIAPH1. Interacts with GRB2 (via SH3 domain); this interaction mediates disassembly of DNM1 polymers, therefore modulates self-assembly. Forms a complex with BIN1 (via SH3 domain) and SH3GL2 (via SH3 domain). Forms a complex with SH3GL2 (via SH3 domain) and AMPH (via SH3 domain). Forms a complex with SH3GL2 (via SH3 domain) and SYNJ1. Interacts (via C-terminal proline-rich domain (PRD)) with SYT1; this interaction facilitates vesicle fission during clathrin-mediated endocytosis (CME). Interacts (via C-terminal proline-rich domain (PRD)) with PLCG1 (via SH3 domain); this interaction stimulates the release of GDP from DNM1 and enhances DNM1-dependent endocytosis. Interacts with SNPH; this interaction inhibits the binding of DNM1 to AMPH and DNM1-receptor-mediated endocytosis. Interacts with CAV1. Interacts with SH3GLB1 (via SH3 domain). Interacts with PACSIN1 (via SH3 domain), PACSIN2 (via SH3 domain) and PACSIN3 (via SH3 domain). Interacts with UNC119; this interaction decreases DNM1's GTPase activity and affects DNM1's interaction with AMPH. Interacts with AMPH. Interacts (GTP-bound form) with DNAJC6; this interaction allows clathrin-coated vesicle (CCV) formation at the plasma membrane. Phosphorylation at Ser-774 by GSK3B/GSK3-beta leads to inactivation of receptor-mediated endocytosis in non-neuronal cells. Dephosphorylation at Ser-774, through the EGFR downstream signaling, leads to activation and regulates early stages of clathrin-mediated endocytosis (CME). Phosphorylated on Tyr in response to EGF stimulation in cells expressing truncated EGFR. Phosphorylated by CDK5 leading to synaptic vesicle endocytosis (SVE) activation. As to expression, expressed exclusively in the brain.

It is found in the cell membrane. The protein resides in the membrane. It localises to the clathrin-coated pit. The protein localises to the cytoplasmic vesicle. Its subcellular location is the presynapse. It is found in the secretory vesicle. The protein resides in the chromaffin granule. The enzyme catalyses GTP + H2O = GDP + phosphate + H(+). Catalyzes the hydrolysis of GTP and utilizes this energy to mediate vesicle scission and participates in many forms of endocytosis, such as clathrin-mediated endocytosis or synaptic vesicle endocytosis as well as rapid endocytosis (RE). Associates to the membrane, through lipid binding, and self-assembles into rings and stacks of interconnected rings through oligomerization to form a helical polymer around the vesicle membrane leading to constriction of invaginated coated pits around their necks. Self-assembly of the helical polymer induces membrane tubules narrowing until the polymer reaches a length sufficient to trigger GTP hydrolysis. Depending on the curvature imposed on the tubules, membrane detachment from the helical polymer upon GTP hydrolysis can cause spontaneous hemifission followed by complete fission. May play a role in regulating early stages of clathrin-mediated endocytosis in non-neuronal cells through its activation by dephosphorylation via the signaling downstream of EGFR. Controls vesicle size at a step before fission, during formation of membrane pits, at hippocampal synapses. Controls plastic adaptation of the synaptic vesicle recycling machinery to high levels of activity. Mediates rapid endocytosis (RE), a Ca(2+)-dependent and clathrin- and K(+)-independent process in chromaffin cells. Microtubule-associated force-producing protein involved in producing microtubule bundles and able to bind and hydrolyze GTP. Through its interaction with DNAJC6, acts during the early steps of clathrin-coated vesicle (CCV) formation. The polypeptide is Dynamin-1 (Mus musculus (Mouse)).